The chain runs to 148 residues: General odorant-binding protein 69a (148 aa).

The first 23 residues, 1-23, serve as a signal peptide directing secretion; sequence MVARHFSFFLALLILYDLIPSNQ. Intrachain disulfides connect cysteine 42–cysteine 74, cysteine 70–cysteine 121, and cysteine 112–cysteine 130.

It belongs to the PBP/GOBP family. In terms of tissue distribution, expressed in the antenna, mostly on the anterior surface of the third antennal segment. Expressed in auxiliary cells and the third antennal segment and exported to the sensillar lymph (at protein level).

The protein localises to the secreted. Odorant-binding protein required for olfactory behavior and activity of pheromone-sensitive neurons in response to the male-specific pheromone cis-vaccenyl acetate (cVA). Modulates social responsivity differently in males and females, regulating male aggression and female receptivity respectively. The sequence is that of General odorant-binding protein 69a (Obp69a) from Drosophila melanogaster (Fruit fly).